A 323-amino-acid chain; its full sequence is Peroxisomal and mitochondrial division factor 2 (323 aa).

3 disordered regions span residues 1 to 55, 73 to 92, and 120 to 143; these read MAEE…NDAI, ESKA…KSDE, and TART…SQKG. The Cytoplasmic segment spans residues 1–297; that stretch reads MAEERSLNGE…WSPNVTAVGS (297 aa). Over residues 13-26 the composition is skewed to acidic residues; that stretch reads GQDDESFFDSDQQG. Residues 28 to 278 are a coiled coil; the sequence is DGKSTELNQK…INGLKNVVEE (251 aa). A helical membrane pass occupies residues 298 to 318; it reads GGAVAAVAVAVAGAAVVCYIY. Over 319–323 the chain is Mitochondrial intermembrane; the sequence is HSRRV.

Homodimer. Interacts with PMD1.

It is found in the mitochondrion outer membrane. Its function is as follows. Involved in morphogenesis and proliferation of mitochondria. Does not act redundantly with PMD1. Is not involved in peroxisomal proliferation. The chain is Peroxisomal and mitochondrial division factor 2 from Arabidopsis thaliana (Mouse-ear cress).